The following is a 76-amino-acid chain: Conotoxin Gla(1)-TxVI (76 aa).

The first 19 residues, 1–19 (MEKLTILLLVAAVLMSTQA), serve as a signal peptide directing secretion. A propeptide spanning residues 20–45 (LVERAGENHSKENINFLLKRKRAADR) is cleaved from the precursor. At Trp48 the chain carries 6'-bromotryptophan. Position 50 is a 4-carboxyglutamate (Glu50). Disulfide bonds link Cys51/Cys65, Cys58/Cys69, and Cys64/Cys73. Pro61 carries the 4-hydroxyproline modification. Glu63, Glu67, and Glu70 each carry 4-carboxyglutamate. Trp76 bears the 6'-bromotryptophan mark.

In terms of tissue distribution, expressed by the venom duct.

The protein localises to the secreted. The polypeptide is Conotoxin Gla(1)-TxVI (Conus textile (Cloth-of-gold cone)).